The following is a 231-amino-acid chain: Large ribosomal subunit protein uL1 (231 aa).

It belongs to the universal ribosomal protein uL1 family. In terms of assembly, part of the 50S ribosomal subunit.

Binds directly to 23S rRNA. The L1 stalk is quite mobile in the ribosome, and is involved in E site tRNA release. In terms of biological role, protein L1 is also a translational repressor protein, it controls the translation of the L11 operon by binding to its mRNA. This chain is Large ribosomal subunit protein uL1, found in Polaromonas naphthalenivorans (strain CJ2).